A 433-amino-acid chain; its full sequence is MGRVQLFEISLSHGRVVYSPGEPLAGTVRVRLGAPLPFRAIRVTCIGSCGVSNKANDTAWVVEEGYFNSSLSLADKGSLPAGEHSFPFQFLLPATAPTSFEGPFGKIVHQVRAAIHTPRFSKDHKCSLVFYILSPLNLNSIPDIEQPNVASATKKFSYKLVKTGSVVLTASTDLRGYVVGQALQLHADVENQSGKDTSPVVASLLQKVSYKAKRWIHDVRTIAEVEGAGVKAWRRAQWHEQILVPALPQSALPGCSLIHIDYYLQVSLKAPEATVTLPVFIGNIAVNHAPVSPRPGLGLPPGAPPLVVPSAPPQEEAEAEAAAGGPHFLDPVFLSTKSHSQRQPLLATLSSVPGAPEPCPQDGSPASHPLHPPLCISTGATVPYFAEGSGGPVPTTSTLILPPEYSSWGYPYEAPPSYEQSCGGVEPSLTPES.

Disordered regions lie at residues 296-322 (GLGL…AEAA) and 349-372 (LSSV…PLHP). Residues 301–312 (PGAPPLVVPSAP) are compositionally biased toward pro residues. Short sequence motifs (PPxY motif) lie at residues 402-405 (PPEY) and 415-418 (PPSY).

It belongs to the arrestin family. As to quaternary structure, interacts (via PPxY motifs) with ITCH (via WW domains); the interaction is direct and participates in the recruitment of the ubiquitin-protein ligase ITCH to the NOTCH1 receptor. Interacts with ARRB1 and ARRB2; the interaction is direct. Interacts with TSG101; may recruit TSG101 to the plasma membrane. Interacts (via PPxY motifs) with WWP2 (via WW domains); ubiquitinates ARRDC1. Interacts with SLC11A2; controls the incorporation of SLC11A2 into extracellular vesicles through an ubiquitination-dependent mechanism. Interacts with WWP1 (via WW domains). Interacts with NEDD4 (via WW domains). Interacts with PDCD6IP. Post-translationally, ubiquitinated. Ubiquitination by WWP2; promotes localization to extracellular microvesicles. Ubiquitinated by WWP1.

The protein resides in the cell membrane. Its function is as follows. Functions as an adapter recruiting ubiquitin-protein ligases to their specific substrates. Through an ubiquitination-dependent mechanism plays for instance a role in the incorporation of SLC11A2 into extracellular vesicles. More generally, plays a role in the extracellular transport of proteins between cells through the release in the extracellular space of microvesicles. By participating in the ITCH-mediated ubiquitination and subsequent degradation of NOTCH1, negatively regulates the NOTCH signaling pathway. This is Arrestin domain-containing protein 1 from Homo sapiens (Human).